The primary structure comprises 400 residues: MGGWSSKPRQGMGTNLSVPNPLGFFPDHQLDPAFGANSHNPDWDFNPNKDHWPEANQVGAGAFGPGFTPPHGGLLGWSPQAQGVLTTVPVAPPPASTNRQSGRQPTPISPPLRDSHPQAMQWNSTTFHQALLDPRVRGLYFPAGGSSSGTVNPVPTTASPISSISSRTGDPAPNMENTTSGFLGPLLVLQAGFFLLTRILTIPQSLDSWWTSLNFLGGAPTCPGQNSQSPTSNHSPTSCPPICPGYRWMCLRRFIIFLFILLLCLIFLLVLLDYQGMLPVCPLLPGTSTTSTGPCKTCTIPAQGTSMFPSCCCTKPSDGNCTCIPIPSSWAFARFLWEGASVRFSWLSLLVPFVQWFVGLSPTVWLSVIWMMWYWGPSLYNILSPFLPLLPIFFCLWVYI.

The residue at position 1 (Met-1) is an N-acetylmethionine. Disordered stretches follow at residues 1–53 (MGGW…DHWP), 88–118 (VPVA…SHPQ), and 145–169 (GSSS…SRTG). A lipid anchor (N-myristoyl glycine; by host) is attached at Gly-2. Positions 2–119 (GGWSSKPRQG…PPLRDSHPQA (118 aa)) are pre-S1. The interval 2–174 (GGWSSKPRQG…SSRTGDPAPN (173 aa)) is pre-S. At 2-181 (GGWSSKPRQG…APNMENTTSG (180 aa)) the chain is on the virion surface; in external conformation side. The Intravirion; in internal conformation portion of the chain corresponds to 2 to 253 (GGWSSKPRQG…PGYRWMCLRR (252 aa)). Residue Trp-4 is glycosylated (N-linked (GlcNAc...) asparagine). Positions 96 to 106 (STNRQSGRQPT) are enriched in polar residues. Residues 120–174 (MQWNSTTFHQALLDPRVRGLYFPAGGSSSGTVNPVPTTASPISSISSRTGDPAPN) form a pre-S2 region. Residues 155 to 166 (PTTASPISSISS) show a composition bias toward low complexity. A helical transmembrane segment spans residues 182–202 (FLGPLLVLQAGFFLLTRILTI). Residues 203-253 (PQSLDSWWTSLNFLGGAPTCPGQNSQSPTSNHSPTSCPPICPGYRWMCLRR) are Intravirion; in external conformation-facing. The helical transmembrane segment at 254 to 274 (FIIFLFILLLCLIFLLVLLDY) threads the bilayer. Residues 275 to 348 (QGMLPVCPLL…GASVRFSWLS (74 aa)) are Virion surface-facing. N-linked (GlcNAc...) asparagine; by host glycosylation occurs at Asn-320. The chain crosses the membrane as a helical span at residues 349–369 (LLVPFVQWFVGLSPTVWLSVI). Residues 370 to 375 (WMMWYW) lie on the Intravirion side of the membrane. Residues 376–398 (GPSLYNILSPFLPLLPIFFCLWV) form a helical membrane-spanning segment. The Virion surface portion of the chain corresponds to 399-400 (YI).

It belongs to the orthohepadnavirus major surface antigen family. In terms of assembly, in its internal form (Li-HBsAg), interacts with the capsid protein and with the isoform S. Interacts with host chaperone CANX. As to quaternary structure, associates with host chaperone CANX through its pre-S2 N glycan; this association may be essential for isoform M proper secretion. Interacts with isoform L. Interacts with the antigens of satellite virus HDV (HDVAgs); this interaction is required for encapsidation of HDV genomic RNA. Isoform M is N-terminally acetylated by host at a ratio of 90%, and N-glycosylated by host at the pre-S2 region. In terms of processing, myristoylated.

Its subcellular location is the virion membrane. Functionally, the large envelope protein exists in two topological conformations, one which is termed 'external' or Le-HBsAg and the other 'internal' or Li-HBsAg. In its external conformation the protein attaches the virus to cell receptors and thereby initiating infection. This interaction determines the species specificity and liver tropism. This attachment induces virion internalization predominantly through caveolin-mediated endocytosis. The large envelope protein also assures fusion between virion membrane and endosomal membrane. In its internal conformation the protein plays a role in virion morphogenesis and mediates the contact with the nucleocapsid like a matrix protein. The middle envelope protein plays an important role in the budding of the virion. It is involved in the induction of budding in a nucleocapsid independent way. In this process the majority of envelope proteins bud to form subviral lipoprotein particles of 22 nm of diameter that do not contain a nucleocapsid. The chain is Large envelope protein from Hepatitis B virus genotype C subtype adr (strain Japan/adr4/1983) (HBV-C).